Here is a 175-residue protein sequence, read N- to C-terminus: MSVLVKRKMIETPISLSKFRYKRFCLPKIHPDILFETNDLPFFVKKLVYLLRKKYDMVNIDDNKLNTIYISTTINGDNFEVLLSFQKKLYINPDINFMAIDVTIKTKESMEFCIKKQCYDHIITIIEKITDKKVYANLPNFFYPKFNQLIEHIIDLNICKTFNNVEKWYFSKLVN.

This is an uncharacterized protein from Acanthamoeba polyphaga mimivirus (APMV).